A 470-amino-acid polypeptide reads, in one-letter code: Protein C-ets-2 (470 aa).

The region spanning 85-170 is the PNT domain; sequence ATFSGFKKEQ…EHLEQMIKEN (86 aa). Ser-225 is subject to Phosphoserine. The disordered stretch occupies residues 270 to 291; it reads ASGKPRDHDSAETGGDSFESSE. Ser-296, Ser-299, and Ser-302 each carry phosphoserine. The segment at residues 364-444 is a DNA-binding region (ETS); that stretch reads IQLWQFLLEL…SGKRYVYRFV (81 aa).

This sequence belongs to the ETS family. Post-translationally, phosphorylation by CDK10 at Ser-225 may create a phosphodegron that targets ETS2 for proteasomal degradation.

The protein localises to the nucleus. Functionally, transcription factor activating transcription. Binds specifically the GGA DNA motif in gene promoters and stimulates transcription of those genes. In Bos taurus (Bovine), this protein is Protein C-ets-2 (ETS2).